Reading from the N-terminus, the 240-residue chain is EF-hand domain-containing protein D2 (240 aa).

A disordered region spans residues 1-51 (MATDELASKLSRRLQMEGEGGEATEQPGLNGAAAAAAAEAPDETAQALGSA). At A2 the chain carries N-acetylalanine. S11 is subject to Phosphoserine. Over residues 32–47 (AAAAAAAEAPDETAQA) the composition is skewed to low complexity. Phosphoserine is present on residues S74 and S76. Position 83 is a phosphotyrosine (Y83). EF-hand domains lie at 92-127 (KQIK…LGAP) and 128-163 (QTHL…AAAG). Residues D105, D109, E116, D141, D143, D145, K147, and E152 each coordinate Ca(2+). Position 233 is an N6-acetyllysine (K233).

In terms of assembly, interacts with CASP9; with inactive form. In terms of tissue distribution, detected in thymus, kidney, spleen, lung, liver and brain. Highest abundance in brain and lowest in kidney and thymus.

It localises to the membrane raft. May regulate B-cell receptor (BCR)-induced immature and primary B-cell apoptosis. Plays a role as negative regulator of the canonical NF-kappa-B-activating branch. Controls spontaneous apoptosis through the regulation of BCL2L1 abundance. This chain is EF-hand domain-containing protein D2 (Efhd2), found in Mus musculus (Mouse).